A 336-amino-acid polypeptide reads, in one-letter code: Flavonol synthase/flavanone 3-hydroxylase (336 aa).

Positions 99–118 (EKESVAKPEDSKDIEGYGTK) are disordered. Positions 196–296 (MAEYMMKINY…RMSWPVFLEP (101 aa)) constitute a Fe2OG dioxygenase domain. 204 to 206 (NYY) is a binding site for 2-oxoglutarate. Fe cation is bound by residues H221, D223, and H277. 287 to 289 (RMS) lines the 2-oxoglutarate pocket.

The protein belongs to the iron/ascorbate-dependent oxidoreductase family. It depends on L-ascorbate as a cofactor. Fe(2+) serves as cofactor. Expressed in young seedlings (at protein level). Expressed in roots, emerging leaves, shoot-root transition zone, trichomes, flowers and siliques. In cotyledons, expressed mostly on the adaxial side and only in guard cells on the abaxial side.

Its subcellular location is the cytoplasm. The protein localises to the nucleus. It carries out the reaction a (2R,3R)-dihydroflavonol + 2-oxoglutarate + O2 = a flavonol + succinate + CO2 + H2O. It catalyses the reaction a (2S)-flavan-4-one + 2-oxoglutarate + O2 = a (2R,3R)-dihydroflavonol + succinate + CO2. The protein operates within secondary metabolite biosynthesis; flavonoid biosynthesis. Its function is as follows. Catalyzes the formation of flavonols from dihydroflavonols. It can act on dihydrokaempferol to produce kaempferol, on dihydroquercetin to produce quercitin and on dihydromyricetin to produce myricetin. In vitro catalyzes the oxidation of both enantiomers of naringenin to give both cis- and trans-dihydrokaempferol. This Arabidopsis thaliana (Mouse-ear cress) protein is Flavonol synthase/flavanone 3-hydroxylase (FLS1).